Here is a 235-residue protein sequence, read N- to C-terminus: Segregation and condensation protein A (235 aa).

This sequence belongs to the ScpA family. In terms of assembly, component of a cohesin-like complex composed of ScpA, ScpB and the Smc homodimer, in which ScpA and ScpB bind to the head domain of Smc. The presence of the three proteins is required for the association of the complex with DNA.

Its subcellular location is the cytoplasm. Its function is as follows. Participates in chromosomal partition during cell division. May act via the formation of a condensin-like complex containing Smc and ScpB that pull DNA away from mid-cell into both cell halves. The polypeptide is Segregation and condensation protein A (Streptococcus equi subsp. zooepidemicus (strain H70)).